Reading from the N-terminus, the 364-residue chain is Succinate--CoA ligase [ADP-forming] subunit beta (364 aa).

Positions 9–229 constitute an ATP-grasp domain; that stretch reads KNIFKKYGIP…EFEEYKNKEK (221 aa). ATP contacts are provided by residues lysine 43, 50–52, glutamate 89, leucine 92, and glutamate 97; that span reads GRG. Mg(2+) is bound by residues asparagine 189 and aspartate 203. Residues asparagine 246 and 303-305 each bind substrate; that span reads GIT.

The protein belongs to the succinate/malate CoA ligase beta subunit family. As to quaternary structure, heterotetramer of two alpha and two beta subunits. The cofactor is Mg(2+).

The catalysed reaction is succinate + ATP + CoA = succinyl-CoA + ADP + phosphate. It catalyses the reaction GTP + succinate + CoA = succinyl-CoA + GDP + phosphate. It functions in the pathway carbohydrate metabolism; tricarboxylic acid cycle; succinate from succinyl-CoA (ligase route): step 1/1. Its function is as follows. Succinyl-CoA synthetase functions in the citric acid cycle (TCA), coupling the hydrolysis of succinyl-CoA to the synthesis of either ATP or GTP and thus represents the only step of substrate-level phosphorylation in the TCA. The beta subunit provides nucleotide specificity of the enzyme and binds the substrate succinate, while the binding sites for coenzyme A and phosphate are found in the alpha subunit. The sequence is that of Succinate--CoA ligase [ADP-forming] subunit beta from Methanocaldococcus jannaschii (strain ATCC 43067 / DSM 2661 / JAL-1 / JCM 10045 / NBRC 100440) (Methanococcus jannaschii).